A 395-amino-acid chain; its full sequence is Renin (395 aa).

The first 21 residues, 1–21 (MLRSWEFVLLISCFLCFSSDA), serve as a signal peptide directing secretion. A propeptide spans 22 to 43 (LQRISLKKMPSIRETLQEMGMK) (activation peptide). Asn-64 carries N-linked (GlcNAc...) asparagine glycosylation. Residues 79–392 (YYGEISIGTP…DRQNNRIGFA (314 aa)) form the Peptidase A1 domain. Residue Asp-97 is part of the active site. Disulfide bonds link Cys-110–Cys-117 and Cys-274–Cys-278. Residue Asp-283 is part of the active site. Cys-316 and Cys-351 are oxidised to a cystine.

This sequence belongs to the peptidase A1 family. Post-translationally, N-glycosylated. In terms of tissue distribution, expressed by the venom gland (at protein level).

It is found in the secreted. It catalyses the reaction Cleavage of Leu-|-Xaa bond in angiotensinogen to generate angiotensin I.. With respect to regulation, inhibited completely by aspartyl protease inhibitor pepstatin A, but not by the serine- or metalloproteinase inhibitors PMSF or EDTA. Its function is as follows. Renin is a highly specific endopeptidase, whose only known function is to generate angiotensin I from angiotensinogen in the plasma, initiating a cascade of reactions that produce an elevation of blood pressure and increased sodium retention by the kidney. This protein is also found in snake venom and shown to specifically cleave human and porcine angiotensinogen into angiotensin I. It does not have general protease activity, no cleavage of alpha or beta casein. May be directly responsible for elevation of blood pressure in the victims of envenomation. This chain is Renin, found in Echis ocellatus (Ocellated saw-scaled viper).